We begin with the raw amino-acid sequence, 189 residues long: Probable chorismate pyruvate-lyase (189 aa).

Substrate is bound by residues R77, L115, and E174.

Belongs to the UbiC family.

It localises to the cytoplasm. The catalysed reaction is chorismate = 4-hydroxybenzoate + pyruvate. The protein operates within cofactor biosynthesis; ubiquinone biosynthesis. In terms of biological role, removes the pyruvyl group from chorismate, with concomitant aromatization of the ring, to provide 4-hydroxybenzoate (4HB) for the ubiquinone pathway. This chain is Probable chorismate pyruvate-lyase, found in Shewanella sp. (strain MR-7).